The following is a 113-amino-acid chain: UPF0339 protein MS1092 (113 aa).

2 repeat units span residues A11–F59 and N62–I110.

This sequence belongs to the UPF0339 family. Duplicated subfamily.

This chain is UPF0339 protein MS1092, found in Mannheimia succiniciproducens (strain KCTC 0769BP / MBEL55E).